The following is a 413-amino-acid chain: Gamma-glutamyl phosphate reductase (413 aa).

The protein belongs to the gamma-glutamyl phosphate reductase family.

It localises to the cytoplasm. The catalysed reaction is L-glutamate 5-semialdehyde + phosphate + NADP(+) = L-glutamyl 5-phosphate + NADPH + H(+). Its pathway is amino-acid biosynthesis; L-proline biosynthesis; L-glutamate 5-semialdehyde from L-glutamate: step 2/2. Functionally, catalyzes the NADPH-dependent reduction of L-glutamate 5-phosphate into L-glutamate 5-semialdehyde and phosphate. The product spontaneously undergoes cyclization to form 1-pyrroline-5-carboxylate. This Geobacillus sp. (strain WCH70) protein is Gamma-glutamyl phosphate reductase.